Consider the following 715-residue polypeptide: Lactococcin transport/processing ATP-binding protein LcnC-like (715 aa).

The region spanning 11–138 is the Peptidase C39 domain; that stretch reads QVDEMDCGCA…SEWTGISLFL (128 aa). Cysteine 17 is a catalytic residue. 5 consecutive transmembrane segments (helical) span residues 167 to 187, 197 to 217, 237 to 257, 282 to 302, and 307 to 327; these read VILN…LGSY, IPNA…LTYI, LAID…MSFF, TILS…ILGL, and LFLL…IFTP. The ABC transmembrane type-1 domain maps to 168-450; sequence ILNIVIASFI…IINLQTKLQK (283 aa). The 234-residue stretch at 482-715 folds into the ABC transporter domain; it reads LNMSEISYQY…NGFYAQLYHN (234 aa). 515-522 contributes to the ATP binding site; sequence GISGSGKS.

The protein belongs to the ABC transporter superfamily. HlyB family.

The protein localises to the cell membrane. Functionally, involved in the export process of a bacteriocin lactococcin. The chain is Lactococcin transport/processing ATP-binding protein LcnC-like (lcnC) from Lactococcus lactis subsp. lactis (strain IL1403) (Streptococcus lactis).